The following is a 476-amino-acid chain: Protein transport protein Sec61 subunit alpha (476 aa).

At 2–33 (GIKFLEVIKPFCAVLPEIQKPERKIQFREKVL) the chain is on the cytoplasmic side. Residues 34–53 (WTAITLFIFLVCCQIPLFGI) form a helical membrane-spanning segment. Residues 54 to 76 (MSSDSADPFYWMRVILASNRGTL) are Lumenal-facing. The chain crosses the membrane as a helical span at residues 77–96 (MELGISPIVTSDLIMQLLAG). Residues 97 to 117 (AKIIEVGDSPKDRALFNGAQK) lie on the Cytoplasmic side of the membrane. The chain crosses the membrane as a helical span at residues 118–138 (LFGMIITIGQAIVYVMTGMYG). Topologically, residues 139 to 144 (DPSEMG) are lumenal. Residues 145-165 (AGICLVIIIQLFVAGLIVLLL) form a helical membrane-spanning segment. Over 166–172 (DELLQKG) the chain is Cytoplasmic. A helical membrane pass occupies residues 173-193 (YGLGSGISLLIATNICETIVW). Topologically, residues 194–240 (KAFSPTTVNTGRGTEFEGAIIALFHLLATRTDKVRALREAFYRQNLP) are lumenal. Residues 241 to 261 (NLMNLIATVFVFAVVIYFQGF) form a helical membrane-spanning segment. Residues 262 to 288 (RVDLPIKSARYRGQYNTYPIKLFYTSN) lie on the Cytoplasmic side of the membrane. The helical transmembrane segment at 289-309 (IPIILQSALVSNLYVISQMLS) threads the bilayer. Residues 310–354 (TRFSGNFIVNLLGTWSDTSTGGPARAYPVGGLCYFLSPPESFGSV) lie on the Lumenal side of the membrane. A helical transmembrane segment spans residues 355–375 (LDDPVHAAIYIVFMLGSCAFF). Topologically, residues 376-420 (SKTWIEVSGSSAKDVAKQLKEQQMVMRGHRETSMVHELNRYIPTA) are cytoplasmic. The helical transmembrane segment at 421–441 (AAFGGLCIGGLSVMADFLGAI) threads the bilayer. Over 442 to 445 (GSGT) the chain is Lumenal. The helical transmembrane segment at 446–462 (GILLAVTIIYQYFEIFV) threads the bilayer. At 463 to 476 (KEQSEMGSMGGLFF) the chain is on the cytoplasmic side.

The protein belongs to the SecY/SEC61-alpha family. As to quaternary structure, the SEC61 channel-forming translocon complex consists of channel-forming core components SEC61A1, SEC61B and SEC61G and different auxiliary components such as SEC62 and SEC63. The SEC61 channel associates with the multi-pass translocon (MPT) complex.

The protein localises to the endoplasmic reticulum membrane. Functionally, component of SEC61 channel-forming translocon complex that mediates transport of signal peptide-containing precursor polypeptides across the endoplasmic reticulum (ER). Forms a ribosome receptor and a gated pore in the ER membrane, both functions required for cotranslational translocation of nascent polypeptides. May cooperate with auxiliary protein SEC62, SEC63 and HSPA5/BiP to enable post-translational transport of small presecretory proteins. The SEC61 channel is also involved in ER membrane insertion of transmembrane proteins: it mediates membrane insertion of the first few transmembrane segments of proteins, while insertion of subsequent transmembrane regions of multi-pass membrane proteins is mediated by the multi-pass translocon (MPT) complex. The sequence is that of Protein transport protein Sec61 subunit alpha (sec61a) from Boreogadus saida (Polar cod).